The chain runs to 517 residues: Cytochrome P450 monooxygenase calE (517 aa).

Residue Asn-8 is glycosylated (N-linked (GlcNAc...) asparagine). Residues 14 to 34 (SLMHHYILIAILVASIIAMVV) traverse the membrane as a helical segment. Residue Cys-458 participates in heme binding.

Belongs to the cytochrome P450 family. Heme is required as a cofactor.

The protein resides in the membrane. Its pathway is secondary metabolite biosynthesis. Functionally, cytochrome P450 monooxygenase; part of the gene cluster that mediates the biosynthesis of calbistrin A and related compounds. Calbistrin A is a secondary metabolite with an interesting structure that was recently found to have bioactivity against leukemia cells. It consists of two polyketides linked by an ester bond: a bicyclic decalin containing polyketide and a linear 12 carbon dioic acid structure. The polyketide synthase calA is probably responsible for forming the decalin moiety. Because calA lacks a designated enoylreductase (ER) domain, the required activity is provided by the trans-enoyl reductase calK. Following release from the PKS, calF then probably catalyzes the oxidation and the subsequent Diels Alder cycloisomerization that lead to the formation of the decalin moiety. The decalin polyketide backbone includes two C-methyl groups, at C7 and C11 in backbone, of which the C7 position is probably methylated by the methyltransferase domain of calA. A candidate for adding the methyl group at C11, if not done by CalA, is the cluster methyltransferase calH. Several additional tailoring enzymes within the cluster could be involved in the modification of the decalin polyketide product. Those include the 3 cytochrome P450 monooxygenases CalE, CalG and CalL, of which one might be responsible for the introduction of the extra hydroxyl group attached to the backbone of the decalin moiety, at position C9 in the backbone, that allows for attachment of the linear moiety. One tailoring enzyme activity that is expected to be involved in biosynthesis of calbistrin is an acyltransferase for connecting the two polyketide synthase products, and which could be performed by the cluster acyltransferase calJ. The enzyme responsible for the biosynthesis of the linear moiety, probably a second PKS, has not been identified yet. The polypeptide is Cytochrome P450 monooxygenase calE (Penicillium decumbens).